The chain runs to 476 residues: Arginine biosynthesis bifunctional protein ArgJ, mitochondrial (476 aa).

Substrate is bound by residues Thr-204, Lys-233, Thr-244, Glu-331, Asn-471, and Thr-476. Residue Thr-244 is the Nucleophile of the active site.

It belongs to the ArgJ family. As to quaternary structure, heterodimer of an alpha and a beta chain. The alpha and beta chains are autoproteolytically processed from a single precursor protein within the mitochondrion.

The protein resides in the mitochondrion matrix. It carries out the reaction N(2)-acetyl-L-ornithine + L-glutamate = N-acetyl-L-glutamate + L-ornithine. The enzyme catalyses L-glutamate + acetyl-CoA = N-acetyl-L-glutamate + CoA + H(+). The protein operates within amino-acid biosynthesis; L-arginine biosynthesis; L-ornithine and N-acetyl-L-glutamate from L-glutamate and N(2)-acetyl-L-ornithine (cyclic): step 1/1. It participates in amino-acid biosynthesis; L-arginine biosynthesis; N(2)-acetyl-L-ornithine from L-glutamate: step 1/4. Functionally, catalyzes two activities which are involved in the cyclic version of arginine biosynthesis: the synthesis of acetylglutamate from glutamate and acetyl-CoA, and of ornithine by transacetylation between acetylornithine and glutamate. This Arthroderma otae (strain ATCC MYA-4605 / CBS 113480) (Microsporum canis) protein is Arginine biosynthesis bifunctional protein ArgJ, mitochondrial.